The sequence spans 284 residues: Tropomyosin (284 aa).

N-acetylmethionine is present on methionine 1. Positions 1–42 are disordered; that stretch reads MDAIKKKMQAMKLEKDNAMDRADTLEQQNKEANNRAEKSEEE. The stretch at 1 to 284 forms a coiled coil; it reads MDAIKKKMQA…DQTFSELSGY (284 aa). The segment covering 12 to 38 has biased composition (basic and acidic residues); sequence KLEKDNAMDRADTLEQQNKEANNRAEK.

The protein belongs to the tropomyosin family. In terms of assembly, homodimer.

Its function is as follows. Tropomyosin, in association with the troponin complex, plays a central role in the calcium dependent regulation of muscle contraction. The sequence is that of Tropomyosin from Pandalus borealis (Northern red shrimp).